Consider the following 248-residue polypeptide: Probable cyclic nucleotide phosphodiesterase CBUA0032 (248 aa).

Fe cation-binding residues include aspartate 13, histidine 15, aspartate 52, asparagine 82, histidine 152, histidine 191, and histidine 193. Residues histidine 15, aspartate 52, and 82–83 (NH) each bind AMP. Histidine 193 is a binding site for AMP.

The protein belongs to the cyclic nucleotide phosphodiesterase class-III family. Fe(2+) is required as a cofactor.

The chain is Probable cyclic nucleotide phosphodiesterase CBUA0032 from Coxiella burnetii (strain RSA 493 / Nine Mile phase I).